Reading from the N-terminus, the 215-residue chain is MDKVQSGFLILFLFLMECQLHLCLPYADGLHPTGNITGLPGSKRSQPPRNITKEPKVFFHKTQLPGIQGAASRSTAASPTNPMKFLRNKAIIRHRPALVKVILISSVAFSIALICGMAISYMIYRLAQAEERQQLESLYKNLRIPLLGDEEEGSEDEGESTHLLPENENELEKFIHSVIISKRSKNIKKKLKEEQNSVTENKTKNASHNGKMEDL.

Residues 1–29 form the signal peptide; sequence MDKVQSGFLILFLFLMECQLHLCLPYADG. Residues 30 to 100 lie on the Extracellular side of the membrane; the sequence is LHPTGNITGL…IIRHRPALVK (71 aa). Residues 101–121 form a helical membrane-spanning segment; sequence VILISSVAFSIALICGMAISY. Residues 122-215 lie on the Cytoplasmic side of the membrane; sequence MIYRLAQAEE…ASHNGKMEDL (94 aa). The tract at residues 191–215 is disordered; it reads LKEEQNSVTENKTKNASHNGKMEDL. Over residues 196–208 the composition is skewed to polar residues; that stretch reads NSVTENKTKNASH.

It localises to the membrane. This is an uncharacterized protein from Homo sapiens (Human).